The following is a 341-amino-acid chain: Anthranilate phosphoribosyltransferase (341 aa).

5-phospho-alpha-D-ribose 1-diphosphate-binding positions include Gly-79, 82–83 (GD), Thr-87, 89–92 (NIST), 107–115 (KHGNRAVSS), and Ser-119. Residue Gly-79 coordinates anthranilate. Ser-91 serves as a coordination point for Mg(2+). Asn-110 is a binding site for anthranilate. Residue Arg-165 coordinates anthranilate. 2 residues coordinate Mg(2+): Asp-224 and Glu-225.

The protein belongs to the anthranilate phosphoribosyltransferase family. As to quaternary structure, homodimer. It depends on Mg(2+) as a cofactor.

The enzyme catalyses N-(5-phospho-beta-D-ribosyl)anthranilate + diphosphate = 5-phospho-alpha-D-ribose 1-diphosphate + anthranilate. The protein operates within amino-acid biosynthesis; L-tryptophan biosynthesis; L-tryptophan from chorismate: step 2/5. Catalyzes the transfer of the phosphoribosyl group of 5-phosphorylribose-1-pyrophosphate (PRPP) to anthranilate to yield N-(5'-phosphoribosyl)-anthranilate (PRA). This is Anthranilate phosphoribosyltransferase from Bacillus cereus (strain G9842).